The primary structure comprises 296 residues: Splicing factor U2af small subunit A (296 aa).

Residues 12–40 form a C3H1-type 1 zinc finger; sequence EKDRVNCPFYFKIGACRHGDRCSRLHNRP. The 103-residue stretch at 44 to 146 folds into the RRM domain; it reads PTLLLSNMYQ…RPIIADFSPV (103 aa). A C3H1-type 2 zinc finger spans residues 148–175; the sequence is DFREATCRQYEENNCNRGGYCNFMHVKL. A compositionally biased stretch (basic residues) spans 191-202; it reads SYRRGSRSRSRS. The interval 191-296 is disordered; the sequence is SYRRGSRSRS…EREEKEEGGA (106 aa). 2 stretches are compositionally biased toward basic and acidic residues: residues 209–254 and 272–296; these read NKRD…DGSR and EGSEERRARIEQWNREREEKEEGGA.

The protein belongs to the splicing factor SR family. As to quaternary structure, component of the spliceosome. Homo- and heterodimer. Interacts with U2AF35B, RNU1 and SR45.

Its subcellular location is the nucleus speckle. Functionally, necessary for the splicing of pre-mRNA. Probably active at the 3' splice sites. The protein is Splicing factor U2af small subunit A of Arabidopsis thaliana (Mouse-ear cress).